Reading from the N-terminus, the 189-residue chain is Elongation factor P 2 (189 aa).

The protein belongs to the elongation factor P family.

The protein resides in the cytoplasm. It functions in the pathway protein biosynthesis; polypeptide chain elongation. Involved in peptide bond synthesis. Stimulates efficient translation and peptide-bond synthesis on native or reconstituted 70S ribosomes in vitro. Probably functions indirectly by altering the affinity of the ribosome for aminoacyl-tRNA, thus increasing their reactivity as acceptors for peptidyl transferase. The polypeptide is Elongation factor P 2 (efp2) (Lactobacillus johnsonii (strain CNCM I-12250 / La1 / NCC 533)).